The primary structure comprises 149 residues: MTDLKAQKRLAADILDVGENRVRFDPDAQAEIADAITREDIRELIEDGTIEAKTAKGNSRGRARKRQQKRAYGHKKGHGSRKGRSGGRQNEKEDWQSRIRAQRRELRELRDAGDISREQYRELYDMASGGEFDSVADLNRYIDDKHGEQ.

The disordered stretch occupies residues 46–99 (EDGTIEAKTAKGNSRGRARKRQQKRAYGHKKGHGSRKGRSGGRQNEKEDWQSRI). Over residues 59-85 (SRGRARKRQQKRAYGHKKGHGSRKGRS) the composition is skewed to basic residues. Positions 89 to 99 (QNEKEDWQSRI) are enriched in basic and acidic residues.

Belongs to the eukaryotic ribosomal protein eL19 family. Part of the 50S ribosomal subunit.

Functionally, binds to the 23S rRNA. The protein is Large ribosomal subunit protein eL19 of Natronomonas pharaonis (strain ATCC 35678 / DSM 2160 / CIP 103997 / JCM 8858 / NBRC 14720 / NCIMB 2260 / Gabara) (Halobacterium pharaonis).